The sequence spans 350 residues: Hydroxymethylglutaryl-CoA synthase (350 aa).

Catalysis depends on E83, which acts as the Proton donor/acceptor. Catalysis depends on C115, which acts as the Acyl-thioester intermediate. (3S)-3-hydroxy-3-methylglutaryl-CoA is bound by residues C115 and T156. R204 serves as a coordination point for CoA. (3S)-3-hydroxy-3-methylglutaryl-CoA is bound by residues T206 and H239. Catalysis depends on H239, which acts as the Proton donor/acceptor. K244 is a binding site for CoA. The (3S)-3-hydroxy-3-methylglutaryl-CoA site is built by N271 and S301.

The protein belongs to the thiolase-like superfamily. Archaeal HMG-CoA synthase family. As to quaternary structure, interacts with acetoacetyl-CoA thiolase that catalyzes the precedent step in the pathway and with a DUF35 protein. The acetoacetyl-CoA thiolase/HMG-CoA synthase complex channels the intermediate via a fused CoA-binding site, which allows for efficient coupling of the endergonic thiolase reaction with the exergonic HMGCS reaction.

It catalyses the reaction acetoacetyl-CoA + acetyl-CoA + H2O = (3S)-3-hydroxy-3-methylglutaryl-CoA + CoA + H(+). It participates in metabolic intermediate biosynthesis; (R)-mevalonate biosynthesis; (R)-mevalonate from acetyl-CoA: step 2/3. In terms of biological role, catalyzes the condensation of acetyl-CoA with acetoacetyl-CoA to form 3-hydroxy-3-methylglutaryl-CoA (HMG-CoA). Functions in the mevalonate (MVA) pathway leading to isopentenyl diphosphate (IPP), a key precursor for the biosynthesis of isoprenoid compounds that are building blocks of archaeal membrane lipids. The polypeptide is Hydroxymethylglutaryl-CoA synthase (Pyrococcus furiosus (strain ATCC 43587 / DSM 3638 / JCM 8422 / Vc1)).